The primary structure comprises 209 residues: Max dimerization protein 4 (209 aa).

Residues 6–23 (LLILLEAAEYLERRDREA) are interaction with SIN3A and SIN3B. The region spanning 53-105 (NNRSSHNELEKHRRAKLRLYLEQLKQLVPLGPDSTRHTTLSLLKRAKVHIKKL) is the bHLH domain. The interval 140-209 (RVRTDSTGSA…CRRLGRPALS (70 aa)) is disordered. Residues 153-163 (DDSEQEVDIEG) show a composition bias toward acidic residues. A compositionally biased stretch (basic residues) spans 199 to 209 (HCRRLGRPALS).

As to quaternary structure, efficient DNA binding requires dimerization with another bHLH protein. Binds DNA as a heterodimer with MAX. Interacts with SIN3A AND SIN3B. Interacts with RNF17.

It localises to the nucleus. In terms of biological role, transcriptional repressor. Binds with MAX to form a sequence-specific DNA-binding protein complex which recognizes the core sequence 5'-CAC[GA]TG-3'. Antagonizes MYC transcriptional activity by competing for MAX and suppresses MYC dependent cell transformation. The chain is Max dimerization protein 4 (MXD4) from Homo sapiens (Human).